The following is an 87-amino-acid chain: Large ribosomal subunit protein bL27 (87 aa).

Residues 1 to 22 (MAHKKAGGSSRNGRDSQGQRRG) form a disordered region.

This sequence belongs to the bacterial ribosomal protein bL27 family.

This is Large ribosomal subunit protein bL27 from Nitratidesulfovibrio vulgaris (strain DP4) (Desulfovibrio vulgaris).